Consider the following 274-residue polypeptide: Bis(5'-nucleosyl)-tetraphosphatase, symmetrical (274 aa).

The protein belongs to the Ap4A hydrolase family.

The enzyme catalyses P(1),P(4)-bis(5'-adenosyl) tetraphosphate + H2O = 2 ADP + 2 H(+). In terms of biological role, hydrolyzes diadenosine 5',5'''-P1,P4-tetraphosphate to yield ADP. In Shewanella sp. (strain W3-18-1), this protein is Bis(5'-nucleosyl)-tetraphosphatase, symmetrical.